Here is a 216-residue protein sequence, read N- to C-terminus: Probable GTP-binding protein EngB (216 aa).

Positions 37–214 (AGLEVAFAGR…RAAMIKLIAE (178 aa)) constitute an EngB-type G domain. Residues 45–52 (GRSNVGKS), 72–76 (GRTQE), 92–95 (DMPG), 159–162 (TKAD), and 193–195 (TSS) each bind GTP. 2 residues coordinate Mg(2+): S52 and T74.

It belongs to the TRAFAC class TrmE-Era-EngA-EngB-Septin-like GTPase superfamily. EngB GTPase family. The cofactor is Mg(2+).

Functionally, necessary for normal cell division and for the maintenance of normal septation. The protein is Probable GTP-binding protein EngB of Rhodopseudomonas palustris (strain BisB18).